Consider the following 139-residue polypeptide: Arsenate reductase (139 aa).

Residues cysteine 10, cysteine 82, and cysteine 89 each act as nucleophile in the active site. Disulfide bonds link cysteine 10–cysteine 82 and cysteine 82–cysteine 89.

The protein belongs to the low molecular weight phosphotyrosine protein phosphatase family. Thioredoxin-coupled ArsC subfamily. In terms of assembly, monomer.

The protein resides in the cytoplasm. The enzyme catalyses arsenate + [thioredoxin]-dithiol + H(+) = arsenite + [thioredoxin]-disulfide + H2O. Activity is potassium and sulfate-independent. Catalyzes the reduction of arsenate [As(V)] to arsenite [As(III)]. In vitro, can dephosphorylate para-nitrophenyl phosphate (pNPP). In Bacillus subtilis (strain 168), this protein is Arsenate reductase.